Reading from the N-terminus, the 1024-residue chain is Integrator complex subunit 7 homolog (1024 aa).

Polar residues-rich tracts occupy residues 1-11 (MSKYKNSSLLN) and 19-36 (PSLS…QLPP). Disordered stretches follow at residues 1–109 (MSKY…PTNS), 472–502 (DNNN…NNNN), and 842–863 (NNNN…NNNN). Composition is skewed to low complexity over residues 44-77 (STNN…NNTV), 85-96 (TAGSSTSSASSV), and 473-502 (NNNN…NNNN).

This sequence belongs to the Integrator subunit 7 family. In terms of assembly, component of the Integrator complex. The core complex associates with protein phosphatase 2A subunits, to form the Integrator-PP2A (INTAC) complex.

It is found in the nucleus. The protein resides in the chromosome. The protein localises to the cytoplasm. Its function is as follows. Component of the integrator complex, a multiprotein complex that terminates RNA polymerase II (Pol II) transcription in the promoter-proximal region of genes. The integrator complex provides a quality checkpoint during transcription elongation by driving premature transcription termination of transcripts that are unfavorably configured for transcriptional elongation: the complex terminates transcription by (1) catalyzing dephosphorylation of the C-terminal domain (CTD) of Pol II subunit polr2a, (2) degrading the exiting nascent RNA transcript via endonuclease activity and (3) promoting the release of Pol II from bound DNA. The integrator complex is also involved in terminating the synthesis of non-coding Pol II transcripts, such as enhancer RNAs (eRNAs), small nuclear RNAs (snRNAs), telomerase RNAs and long non-coding RNAs (lncRNAs). In Dictyostelium discoideum (Social amoeba), this protein is Integrator complex subunit 7 homolog (ints7).